The following is a 1426-amino-acid chain: MHSSNPKVRSSPSGNTQSSPKSKQEVMVRPPTVMSPSGNPQLDSKFSNQGKQGGSASQSQPSPCDSKSGGHTPKALPGPGGSMGLKNGAGNGAKGKGKRERSISADSFDQRDPGTPNDDSDIKECNSADHIKSQDSQHTPHSMTPSNATAPRSSTPSHGQTTATEPTPAQKTPAKVVYVFSTEMANKAAEAVLKGQVETIVSFHIQNISNNKTERSTAPLNTQISALRNDPKPLPQQPPAPANQDQNSSQNTRLQPTPPIPAPAPKPAAPPRPLDRESPGVENKLIPSVGSPASSTPLPPDGTGPNSTPNNRAVTPVSQGSNSSSADPKAPPPPPVSSGEPPTLGENPDGLSQEQLEHRERSLQTLRDIQRMLFPDEKEFTGAQSGGPQQNPGVLDGPQKKPEGPIQAMMAQSQSLGKGPGPRTDVGAPFGPQGHRDVPFSPDEMVPPSMNSQSGTIGPDHLDHMTPEQIAWLKLQQEFYEEKRRKQEQVVVQQCSLQDMMVHQHGPRGVVRGPPPPYQMTPSEGWAPGGTEPFSDGINMPHSLPPRGMAPHPNMPGSQMRLPGFAGMINSEMEGPNVPNPASRPGLSGVSWPDDVPKIPDGRNFPPGQGIFSGPGRGERFPNPQGLSEEMFQQQLAEKQLGLPPGMAMEGIRPSMEMNRMIPGSQRHMEPGNNPIFPRIPVEGPLSPSRGDFPKGIPPQMGPGRELEFGMVPSGMKGDVNLNVNMGSNSQMIPQKMREAGAGPEEMLKLRPGGSDMLPAQQKMVPLPFGEHPQQEYGMGPRPFLPMSQGPGSNSGLRNLREPIGPDQRTNSRLSHMPPLPLNPSSNPTSLNTAPPVQRGLGRKPLDISVAGSQVHSPGINPLKSPTMHQVQSPMLGSPSGNLKSPQTPSQLAGMLAGPAAAASIKSPPVLGSAAASPVHLKSPSLPAPSPGWTSSPKPPLQSPGIPPNHKAPLTMASPAMLGNVESGGPPPPTASQPASVNIPGSLPSSTPYTMPPEPTLSQNPLSIMMSRMSKFAMPSSTPLYHDAIKTVASSDDDSPPARSPNLPSMNNMPGMGINTQNPRISGPNPVVPMPTLSPMGMTQPLSHSNQMPSPNAVGPNIPPHGVPMGPGLMSHNPIMGHGSQEPPMVPQGRMGFPQGFPPVQSPPQQVPFPHNGPSGGQGSFPGGMGFPGEGPLGRPSNLPQSSADAALCKPGGPGGPDSFTVLGNSMPSVFTDPDLQEVIRPGATGIPEFDLSRIIPSEKPSQTLQYFPRGEVPGRKQPQGPGPGFSHMQGMMGEQAPRMGLALPGMGGPGPVGTPDIPLGTAPSMPGHNPMRPPAFLQQGMMGPHHRMMSPAQSTMPGQPTLMSNPAAAVGMIPGKDRGPAGLYTHPGPVGSPGMMMSMQGMMGPQQNIMIPPQMRPRGMAADVGMGGFSQGPGNPGNMMF.

Composition is skewed to polar residues over residues 1–21 and 34–46; these read MHSS…SSPK and MSPS…DSKF. Residues 1–173 are disordered; sequence MHSSNPKVRS…TEPTPAQKTP (173 aa). Over residues 47-62 the composition is skewed to low complexity; sequence SNQGKQGGSASQSQPS. Residues 78-94 show a composition bias toward gly residues; it reads GPGGSMGLKNGAGNGAK. Basic and acidic residues-rich tracts occupy residues 100–112 and 120–135; these read ERSI…DQRD and SDIK…KSQD. Ser-104 is modified (phosphoserine). A compositionally biased stretch (polar residues) spans 136–170; sequence SQHTPHSMTPSNATAPRSSTPSHGQTTATEPTPAQ. A Phosphoserine modification is found at Ser-157. Thr-172 is subject to Phosphothreonine. The interaction with PYGO1 stretch occupies residues 177-205; the sequence is VYVFSTEMANKAAEAVLKGQVETIVSFHI. Polar residues predominate over residues 207–226; the sequence is NISNNKTERSTAPLNTQISA. Disordered regions lie at residues 207–439 and 597–625; these read NISN…RDVP and PKIP…PNPQ. Pro residues-rich tracts occupy residues 232–241 and 256–272; these read KPLPQQPPAP and PTPP…APPR. Over residues 304 to 320 the composition is skewed to polar residues; it reads GPNSTPNNRAVTPVSQG. Thr-315 is subject to Phosphothreonine. A phosphoserine mark is found at Ser-318 and Ser-352. The segment covering 355-380 has biased composition (basic and acidic residues); sequence QLEHRERSLQTLRDIQRMLFPDEKEF. The segment at 358-374 is interaction with CTNNB1; sequence HRERSLQTLRDIQRMLF. Polar residues predominate over residues 382-392; sequence GAQSGGPQQNP. 2 positions are modified to phosphoserine: Ser-687 and Ser-689. Residues 787-895 are disordered; it reads MSQGPGSNSG…PQTPSQLAGM (109 aa). At Arg-801 the chain carries Asymmetric dimethylarginine. Over residues 823–836 the composition is skewed to low complexity; it reads NPSSNPTSLNTAPP. Lys-844 is subject to N6-acetyllysine. Polar residues predominate over residues 867 to 891; it reads TMHQVQSPMLGSPSGNLKSPQTPSQ. 2 positions are modified to phosphoserine: Ser-907 and Ser-917. Disordered stretches follow at residues 910–1002, 1032–1052, 1152–1203, and 1253–1275; these read VLGS…PTLS, VASS…SMNN, PFPH…GPDS, and PRGE…HMQG. A compositionally biased stretch (pro residues) spans 937 to 947; the sequence is PKPPLQSPGIP. A compositionally biased stretch (gly residues) spans 1158 to 1176; sequence PSGGQGSFPGGMGFPGEGP.

This sequence belongs to the BCL9 family. In terms of assembly, binds to beta-catenin (CTNNB1), PYGO1 and PYGO2; the interaction with PYGO1 increases PYGO1 affinity to histone H3 methylated at 'Lys 4'. As to expression, detected at low levels in thymus, prostate, testis, ovary and small intestine, and at lower levels in spleen, colon and blood.

The protein resides in the nucleus. Its function is as follows. Involved in signal transduction through the Wnt pathway. Promotes beta-catenin's transcriptional activity. The protein is B-cell CLL/lymphoma 9 protein (BCL9) of Homo sapiens (Human).